The primary structure comprises 483 residues: Betaine aldehyde dehydrogenase (483 aa).

K(+)-binding residues include isoleucine 27 and aspartate 93. An NAD(+)-binding site is contributed by 149 to 151 (GAW). Lysine 161 serves as the catalytic Charge relay system. 175–178 (KPSE) is an NAD(+) binding site. Valine 179 provides a ligand contact to K(+). 228 to 231 (SVPT) contacts NAD(+). Valine 243 serves as a coordination point for K(+). Catalysis depends on glutamate 249, which acts as the Proton acceptor. The NAD(+) site is built by glycine 251, cysteine 283, and glutamate 380. The Nucleophile role is filled by cysteine 283. At cysteine 283 the chain carries Cysteine sulfenic acid (-SOH). Lysine 450 and glycine 453 together coordinate K(+). The active-site Charge relay system is glutamate 457.

Belongs to the aldehyde dehydrogenase family. As to quaternary structure, dimer of dimers. K(+) is required as a cofactor.

The enzyme catalyses betaine aldehyde + NAD(+) + H2O = glycine betaine + NADH + 2 H(+). It participates in amine and polyamine biosynthesis; betaine biosynthesis via choline pathway; betaine from betaine aldehyde: step 1/1. In terms of biological role, involved in the biosynthesis of the osmoprotectant glycine betaine. Catalyzes the irreversible oxidation of betaine aldehyde to the corresponding acid. The polypeptide is Betaine aldehyde dehydrogenase (Cereibacter sphaeroides (strain ATCC 17025 / ATH 2.4.3) (Rhodobacter sphaeroides)).